The chain runs to 434 residues: MQDRTLTAEVTPGDEITVAGWVHEIRDLGGIAFLILRDRSGKIQIKFEKDEMNDEIVQTGLDVPRESVISITGVADDEPRAPTDVEIVPTAIEVLSSADTELPLDPSGKVNADLSTRLDNRTLDLRKKEVKAVFQIRSEVLRAARDAFRELGCTEINTPKIVATGTEGGTELFPITYFGEEAFMNQSPQLFKQLMIGSGLERVFEIGPIFRAEEHNTPRHLNEATSIDFESAFINHAEAMDACEYVVTAAYQGVAENCITELETLGLRDGFSVPDESFPRISYQEAIERINATGELDEQLVWGDDLPTDGERALGADVGSHYFITDWPSEIKPFYIKDHDDDKTLSTGFDMMHPQMELVSGGQREHRYEHLVSGFEQQGLDPEQFDYYTKMFRYGMPPHAGWGLGGERLVMTMLGLENIREAVLFPRDRQRLSP.

Residue glutamate 167 participates in L-aspartate binding. Positions 189–192 are aspartate; sequence QLFK. Residue arginine 211 participates in L-aspartate binding. ATP-binding positions include 211 to 213, 219 to 221, and glutamate 357; these read RAE and RHL. Positions 357 and 360 each coordinate Mg(2+). Serine 360 and arginine 364 together coordinate L-aspartate. An ATP-binding site is contributed by 405-408; the sequence is GGER.

It belongs to the class-II aminoacyl-tRNA synthetase family. Type 2 subfamily. As to quaternary structure, homodimer. It depends on Mg(2+) as a cofactor.

The protein resides in the cytoplasm. It carries out the reaction tRNA(Asx) + L-aspartate + ATP = L-aspartyl-tRNA(Asx) + AMP + diphosphate. Functionally, aspartyl-tRNA synthetase with relaxed tRNA specificity since it is able to aspartylate not only its cognate tRNA(Asp) but also tRNA(Asn). Reaction proceeds in two steps: L-aspartate is first activated by ATP to form Asp-AMP and then transferred to the acceptor end of tRNA(Asp/Asn). The chain is Aspartate--tRNA(Asp/Asn) ligase from Haloquadratum walsbyi (strain DSM 16790 / HBSQ001).